A 776-amino-acid chain; its full sequence is Disintegrin and metalloproteinase domain-containing protein 7 (776 aa).

An N-terminal signal peptide occupies residues 1–23 (MLPGCIFLMILLILQVKEKVILG). The propeptide occupies 24–176 (VEGQQLVYPK…NYSCTELNFT (153 aa)). Over 26–669 (GQQLVYPKKL…WEETLNVTNV (644 aa)) the chain is Extracellular. N-linked (GlcNAc...) asparagine glycosylation is found at N84, N167, and N174. The Peptidase M12B domain maps to 199-394 (KYIELFIVAD…YKPTCMLNIP (196 aa)). Disulfide bonds link C310–C389, C350–C373, C352–C357, and C460–C480. The Disintegrin domain maps to 402 to 488 (FQFCGNKKLD…ACPKDQFRVN (87 aa)). N-linked (GlcNAc...) asparagine glycosylation is found at N584, N629, and N665. The helical transmembrane segment at 670 to 690 (AILIVVLVLVIVGIGVLILLI) threads the bilayer. The Cytoplasmic portion of the chain corresponds to 691–776 (RYQKCIKLKQ…GIADPNQSAK (86 aa)). The segment at 757 to 776 (TLKPASKDSRGIADPNQSAK) is disordered.

Interacts with ITM2B in sperm; the interaction increases following capacitation. Interacts with HSPA5 and CANX.

The protein resides in the membrane. Functionally, required for normal male fertility via maintenance of epithelial cell morphology in the caput epididymis and subsequently correct epididymis lumen structure required for sperm development. Plays a role in sperm motility, flagella morphology and tyrosine phosphorylation during sperm capacitance. Plays a role in normal expression levels of HSPA5, ITM2B and ADAM2 in sperm both prior to and post-capacitation. This is a non catalytic metalloprotease-like protein. This is Disintegrin and metalloproteinase domain-containing protein 7 (ADAM7) from Macaca fascicularis (Crab-eating macaque).